Consider the following 438-residue polypeptide: Argininosuccinate lyase (438 aa).

Belongs to the lyase 1 family. Argininosuccinate lyase subfamily.

Its subcellular location is the cytoplasm. The enzyme catalyses 2-(N(omega)-L-arginino)succinate = fumarate + L-arginine. It functions in the pathway amino-acid biosynthesis; L-arginine biosynthesis; L-arginine from L-ornithine and carbamoyl phosphate: step 3/3. This chain is Argininosuccinate lyase, found in Clostridium tetani (strain Massachusetts / E88).